Consider the following 452-residue polypeptide: UDP-N-acetylmuramoylalanine--D-glutamate ligase (452 aa).

ATP is bound at residue 115–121; that stretch reads GTNGKTT.

It belongs to the MurCDEF family.

The protein resides in the cytoplasm. The catalysed reaction is UDP-N-acetyl-alpha-D-muramoyl-L-alanine + D-glutamate + ATP = UDP-N-acetyl-alpha-D-muramoyl-L-alanyl-D-glutamate + ADP + phosphate + H(+). Its pathway is cell wall biogenesis; peptidoglycan biosynthesis. Its function is as follows. Cell wall formation. Catalyzes the addition of glutamate to the nucleotide precursor UDP-N-acetylmuramoyl-L-alanine (UMA). The protein is UDP-N-acetylmuramoylalanine--D-glutamate ligase of Citrifermentans bemidjiense (strain ATCC BAA-1014 / DSM 16622 / JCM 12645 / Bem) (Geobacter bemidjiensis).